The primary structure comprises 424 residues: Argininosuccinate synthase (424 aa).

ATP contacts are provided by residues alanine 9–serine 17 and alanine 35. The L-citrulline site is built by tyrosine 86 and serine 91. Serine 114–asparagine 122 contributes to the ATP binding site. Residues threonine 118, asparagine 122, and aspartate 123 each coordinate L-aspartate. Asparagine 122 is an L-citrulline binding site. L-citrulline-binding residues include arginine 126, serine 179, serine 188, glutamate 269, and tyrosine 281.

Belongs to the argininosuccinate synthase family. In terms of assembly, homotetramer.

The enzyme catalyses L-citrulline + L-aspartate + ATP = 2-(N(omega)-L-arginino)succinate + AMP + diphosphate + H(+). It participates in amino-acid biosynthesis; L-arginine biosynthesis; L-arginine from L-ornithine and carbamoyl phosphate: step 2/3. It functions in the pathway nitrogen metabolism; urea cycle; (N(omega)-L-arginino)succinate from L-aspartate and L-citrulline: step 1/1. This chain is Argininosuccinate synthase, found in Anopheles gambiae (African malaria mosquito).